The following is a 362-amino-acid chain: Transcriptional repressor PifC (362 aa).

In terms of biological role, transcription repression of its own gene by binding to the PIF operator (pifO) and replication initiation from the primary origin (ori-1). Transcriptional repressor of the pifA and pifB. In Escherichia coli (strain K12), this protein is Transcriptional repressor PifC (pifC).